Consider the following 245-residue polypeptide: Protein mlo1 (245 aa).

The 35-residue stretch at 4–38 (YKSLKVAELREKLAEKGLSTAGNKAELVSRLTAAT) folds into the SAP domain. The segment at 32 to 245 (SRLTAATESN…AERFGVAAKN (214 aa)) is disordered. The span at 37–52 (ATESNDENTSNNNATD) shows a compositional bias: low complexity. Acidic residues predominate over residues 58–70 (PPEDDIDWGDMEN). The span at 109–118 (TSQAPETSTG) shows a compositional bias: polar residues. Over residues 119-130 (AEEHQETTEESK) the composition is skewed to basic and acidic residues. Serine 139 is modified (phosphoserine). A compositionally biased stretch (low complexity) spans 182–196 (SSNNKNHNQSKNPQN).

Belongs to the SAP domain-containing ribonucleoprotein family.

The sequence is that of Protein mlo1 (mlo1) from Schizosaccharomyces pombe (strain 972 / ATCC 24843) (Fission yeast).